A 207-amino-acid chain; its full sequence is Thymidylate kinase (207 aa).

ATP is bound at residue 10–17 (GIEGSGKS).

The protein belongs to the thymidylate kinase family.

The catalysed reaction is dTMP + ATP = dTDP + ADP. In terms of biological role, phosphorylation of dTMP to form dTDP in both de novo and salvage pathways of dTTP synthesis. This chain is Thymidylate kinase, found in Halothermothrix orenii (strain H 168 / OCM 544 / DSM 9562).